A 425-amino-acid polypeptide reads, in one-letter code: Metacaspase-1 (425 aa).

Residues 1-110 (MSYNSNPYNG…PQLPNTQTQS (110 aa)) are disordered. A compositionally biased stretch (low complexity) spans 13 to 28 (YPPYNTYTRPNYSPNN). Composition is skewed to polar residues over residues 29–38 (GSQSNNTVHQ) and 88–110 (TGANSYGNPNYSGPQLPNTQTQS). Residues H214 and C270 contribute to the active site.

The protein belongs to the peptidase C14B family.

It is found in the cytoplasm. It localises to the nucleus. Functionally, involved in cell death (apoptosis). The polypeptide is Metacaspase-1 (pca1) (Schizosaccharomyces pombe (strain 972 / ATCC 24843) (Fission yeast)).